The chain runs to 473 residues: Ornithine aminotransferase, mitochondrial (473 aa).

A mitochondrion-targeting transit peptide spans 1 to 32 (MAAALARRGGGGLARALARGRGMCSATAAERA). Lysine 293 carries the N6-(pyridoxal phosphate)lysine modification.

It belongs to the class-III pyridoxal-phosphate-dependent aminotransferase family. In terms of assembly, homotetramer. Pyridoxal 5'-phosphate is required as a cofactor.

It localises to the mitochondrion matrix. It catalyses the reaction a 2-oxocarboxylate + L-ornithine = L-glutamate 5-semialdehyde + an L-alpha-amino acid. It functions in the pathway amino-acid biosynthesis; L-proline biosynthesis; L-glutamate 5-semialdehyde from L-ornithine: step 1/1. Functionally, confers drought and oxidative stress tolerance mainly through enhancing ROS-scavenging capacity and Pro pre-accumulation. This is Ornithine aminotransferase, mitochondrial (OAT) from Oryza sativa subsp. japonica (Rice).